Reading from the N-terminus, the 164-residue chain is Phosphopantetheine adenylyltransferase (164 aa).

Substrate is bound at residue threonine 10. Residues 10–11 (TF) and histidine 18 each bind ATP. Substrate-binding residues include lysine 42, leucine 74, and arginine 88. Residues 89–91 (GIR), glutamate 99, and 124–130 (NSFISST) each bind ATP.

Belongs to the bacterial CoaD family. As to quaternary structure, homohexamer. Mg(2+) is required as a cofactor.

It is found in the cytoplasm. The enzyme catalyses (R)-4'-phosphopantetheine + ATP + H(+) = 3'-dephospho-CoA + diphosphate. The protein operates within cofactor biosynthesis; coenzyme A biosynthesis; CoA from (R)-pantothenate: step 4/5. In terms of biological role, reversibly transfers an adenylyl group from ATP to 4'-phosphopantetheine, yielding dephospho-CoA (dPCoA) and pyrophosphate. The polypeptide is Phosphopantetheine adenylyltransferase (Pseudoalteromonas translucida (strain TAC 125)).